Reading from the N-terminus, the 281-residue chain is 2,3,4,5-tetrahydropyridine-2,6-dicarboxylate N-succinyltransferase (281 aa).

Substrate contacts are provided by Arg-108 and Asp-145.

The protein belongs to the transferase hexapeptide repeat family. In terms of assembly, homotrimer.

The protein resides in the cytoplasm. The enzyme catalyses (S)-2,3,4,5-tetrahydrodipicolinate + succinyl-CoA + H2O = (S)-2-succinylamino-6-oxoheptanedioate + CoA. Its pathway is amino-acid biosynthesis; L-lysine biosynthesis via DAP pathway; LL-2,6-diaminopimelate from (S)-tetrahydrodipicolinate (succinylase route): step 1/3. This Rhodopseudomonas palustris (strain BisB5) protein is 2,3,4,5-tetrahydropyridine-2,6-dicarboxylate N-succinyltransferase.